The following is a 434-amino-acid chain: Enolase (434 aa).

Position 165 (Q165) interacts with (2R)-2-phosphoglycerate. The Proton donor role is filled by E207. The Mg(2+) site is built by D244, E291, and D318. Residues K343, R372, S373, and K394 each contribute to the (2R)-2-phosphoglycerate site. The active-site Proton acceptor is K343.

The protein belongs to the enolase family. Mg(2+) serves as cofactor.

Its subcellular location is the cytoplasm. It localises to the secreted. It is found in the cell surface. It carries out the reaction (2R)-2-phosphoglycerate = phosphoenolpyruvate + H2O. The protein operates within carbohydrate degradation; glycolysis; pyruvate from D-glyceraldehyde 3-phosphate: step 4/5. Functionally, catalyzes the reversible conversion of 2-phosphoglycerate (2-PG) into phosphoenolpyruvate (PEP). It is essential for the degradation of carbohydrates via glycolysis. The chain is Enolase from Staphylococcus saprophyticus subsp. saprophyticus (strain ATCC 15305 / DSM 20229 / NCIMB 8711 / NCTC 7292 / S-41).